The primary structure comprises 1254 residues: Structural polyprotein (1254 aa).

The host transcription inhibition stretch occupies residues 43–77; sequence LQAQQMQQLISAVSALTTKQNVKAPKGQRKQKQQK. The segment at 60 to 112 is disordered; that stretch reads TKQNVKAPKGQRKQKQQKPKEKKEKQKKKPTXKKKQQQKPKPQAKKKKPGRRE. Positions 70–108 match the Nuclear localization signal motif; it reads QRKQKQQKPKEKKEKQKKKPTXKKKQQQKPKPQAKKKKP. The segment covering 84 to 110 has biased composition (basic residues); it reads KQKKKPTXKKKQQQKPKPQAKKKKPGR. The binding to the viral RNA stretch occupies residues 95-123; sequence QQQKPKPQAKKKKPGRRERMCMKIENDCI. Residues 108-122 form a ribosome-binding region; it reads PGRRERMCMKIENDC. C122 and C137 are joined by a disulfide. The Peptidase S3 domain occupies 122–270; that stretch reads CIFEVKLDGK…RVTPEGTEEW (149 aa). Catalysis depends on H148, which acts as the Charge relay system. The Nuclear export signal motif lies at 153–163; the sequence is IDNPDLAKLTY. Residues 164 to 169 are interaction with spike glycoprotein E2; sequence KKSSKY. D170 serves as the catalytic Charge relay system. The dimerization of the capsid protein stretch occupies residues 192-202; the sequence is PEGHYNWHHGA. S222 (charge relay system) is an active-site residue. The interval 228-232 is dimerization of the capsid protein; sequence DNKGR. The Extracellular portion of the chain corresponds to 270–694; it reads WSAALMMCIL…PHEIIQYYYG (425 aa). Residues 271–282 form a functions as an uncleaved signal peptide for the precursor of protein E3/E2 region; that stretch reads SAALMMCILANT. Cystine bridges form between C277–C286, C291–C295, and C294–C326. N-linked (GlcNAc...) asparagine; by host glycosylation occurs at N281. N328 is a glycosylation site (N-linked (GlcNAc...) asparagine; by host). Intrachain disulfides connect C353–C459, C356–C362, C425–C439, C487–C599, C535–C559, and C537–C554. Interaction with host Mxra8 receptor regions lie at residues 360 to 363 and 396 to 398; these read YFCY and HAH. The segment at 518–521 is interaction with host Mxra8 receptor; sequence TAGN. Residue N534 is glycosylated (N-linked (GlcNAc...) asparagine; by host). The tract at residues 550–556 is interaction with host Mxra8 receptor; sequence TINTCKI. N596 is a glycosylation site (N-linked (GlcNAc...) asparagine; by host). A helical membrane pass occupies residues 695 to 715; that stretch reads LYPAATIAAVSGASLMALLTL. Over 716-756 the chain is Cytoplasmic; it reads AATCCMLATARRKCLTPYALTPGAVVPLTLGLLXCAPRANA. C719 carries the S-palmitoyl cysteine; by host lipid modification. The interval 724–728 is interaction with the capsid protein; that stretch reads TARRK. S-palmitoyl cysteine; by host attachment occurs at residues C729 and C750. Positions 729–749 are transient transmembrane before p62-6K protein processing; the sequence is CLTPYALTPGAVVPLTLGLLX. The cysteines at positions 729 and 750 are disulfide-linked. At 757 to 771 the chain is on the extracellular side; that stretch reads ASFAETMAYLWDENK. A helical membrane pass occupies residues 772 to 792; the sequence is TLFWMEXXXXXXALALLACCI. A topological domain (cytoplasmic) is located at residue K793. Residues 794–814 traverse the membrane as a helical segment; it reads SLICCCKPFSFLVLLSLGASA. Residues 815–1231 lie on the Extracellular side of the membrane; that stretch reads KAYEHTATIP…AMTWVQRMAS (417 aa). Cystine bridges form between C865/C930, C878/C910, C879/C912, and C884/C894. Positions 900-917 are E1 fusion peptide loop; sequence VYPFMWGGAYCFCDSENT. Residue N957 is glycosylated (N-linked (GlcNAc...) asparagine; by host). 4 disulfide bridges follow: C1075/C1087, C1117/C1192, C1122/C1196, and C1144/C1186. A helical transmembrane segment spans residues 1232–1252; it reads GLGGLALIAVVVLVLVTCITM. C1249 is lipidated: S-palmitoyl cysteine; by host. The S-stearoyl cysteine; by host moiety is linked to residue C1249. Residues 1253–1254 are Cytoplasmic-facing; the sequence is RR.

In terms of assembly, homodimer. Homomultimer. Interacts with host karyopherin KPNA4; this interaction allows the nuclear import of the viral capsid protein. Interacts with spike glycoprotein E2. Interacts with host IRAK1; the interaction leads to inhibition of IRAK1-dependent signaling. The precursor of protein E3/E2 and E1 form a heterodimer shortly after synthesis. As to quaternary structure, the precursor of protein E3/E2 and E1 form a heterodimer shortly after synthesis. Processing of the precursor of protein E3/E2 into E2 and E3 results in a heterodimer of the spike glycoproteins E2 and E1. Spike at virion surface are constituted of a trimer of E2-E1 heterodimers. After target cell attachment and endocytosis, E1 change conformation to form homotrimers. Interacts with 6K protein. In terms of assembly, interacts with spike glycoprotein E1. Processing of the precursor of protein E3/E2 into E2 and E3 results in a heterodimer of the spike glycoproteins E2 and E1. Spike at virion surface are constituted of a trimer of E2-E1 heterodimers. Interacts with 6K protein. Interacts with host MXRA8; this interaction mediates virus entry. Post-translationally, structural polyprotein: Specific enzymatic cleavages in vivo yield mature proteins. Capsid protein is auto-cleaved during polyprotein translation, unmasking a signal peptide at the N-terminus of the precursor of E3/E2. The remaining polyprotein is then targeted to the host endoplasmic reticulum, where host signal peptidase cleaves it into pE2, 6K and E1 proteins. pE2 is further processed to mature E3 and E2 by host furin in trans-Golgi vesicle. In terms of processing, palmitoylated via thioester bonds. These palmitoylations may induce disruption of the C-terminus transmembrane. This would result in the reorientation of E2 C-terminus from lumenal to cytoplasmic side. N-glycosylated. Post-translationally, palmitoylated via thioester bonds.

The protein localises to the virion. Its subcellular location is the host cytoplasm. It is found in the host cell membrane. It localises to the host nucleus. The protein resides in the virion membrane. The protein localises to the host Golgi apparatus. Its subcellular location is the host trans-Golgi network. It is found in the host endoplasmic reticulum. It carries out the reaction Autocatalytic release of the core protein from the N-terminus of the togavirus structural polyprotein by hydrolysis of a -Trp-|-Ser- bond.. Its function is as follows. Forms an icosahedral capsid with a T=4 symmetry composed of 240 copies of the capsid protein surrounded by a lipid membrane through which penetrate 80 spikes composed of trimers of E1-E2 heterodimers. The capsid protein binds to the viral RNA genome at a site adjacent to a ribosome binding site for viral genome translation following genome release. Possesses a protease activity that results in its autocatalytic cleavage from the nascent structural protein. Following its self-cleavage, the capsid protein transiently associates with ribosomes, and within several minutes the protein binds to viral RNA and rapidly assembles into icosahedric core particles. The resulting nucleocapsid eventually associates with the cytoplasmic domain of the spike glycoprotein E2 at the cell membrane, leading to budding and formation of mature virions. In case of infection, new virions attach to target cells and after clathrin-mediated endocytosis their membrane fuses with the host endosomal membrane. This leads to the release of the nucleocapsid into the cytoplasm, followed by an uncoating event necessary for the genomic RNA to become accessible. The uncoating might be triggered by the interaction of capsid proteins with ribosomes. Binding of ribosomes would release the genomic RNA since the same region is genomic RNA-binding and ribosome-binding. Specifically inhibits interleukin-1 receptor-associated kinase 1/IRAK1-dependent signaling during viral entry, representing a means by which the alphaviruses may evade innate immune detection and activation prior to viral gene expression. Functionally, provides the signal sequence for the translocation of the precursor of protein E3/E2 to the host endoplasmic reticulum. Furin-cleaved E3 remains associated with spike glycoprotein E1 and mediates pH protection of the latter during the transport via the secretory pathway. After virion release from the host cell, the assembly protein E3 is gradually released in the extracellular space. In terms of biological role, plays a role in viral attachment to target host cell, by binding to the cell receptor MXRA8. The host LDLR may also act as a cell receptor for viral entry. Synthesized as a p62 precursor which is processed by furin at the cell membrane just before virion budding, giving rise to E2-E1 heterodimer. The p62-E1 heterodimer is stable, whereas E2-E1 is unstable and dissociate at low pH. p62 is processed at the last step, presumably to avoid E1 fusion activation before its final export to cell surface. E2 C-terminus contains a transitory transmembrane that would be disrupted by palmitoylation, resulting in reorientation of the C-terminal tail from lumenal to cytoplasmic side. This step is critical since E2 C-terminus is involved in budding by interacting with capsid proteins. This release of E2 C-terminus in cytoplasm occurs lately in protein export, and precludes premature assembly of particles at the endoplasmic reticulum membrane. Acts as a viroporin that participates in virus glycoprotein processing and transport to the plasma membrane, cell permeabilization and budding of viral particles. The cation channel is permeable to Na(+)&gt;K(+)&gt;Ca(2+) in vitro. Disrupts the calcium homeostasis of the cell, probably at the endoplasmic reticulum level. This leads to cytoplasmic calcium elevation. Because of its lipophilic properties, the 6K protein is postulated to influence the selection of lipids that interact with the transmembrane domains of the glycoproteins, which, in turn, affects the deformability of the bilayer required for the extreme curvature that occurs as budding proceeds. Present in low amount in virions, about 3% compared to viral glycoproteins. Its function is as follows. Class II viral fusion protein. Fusion activity is inactive as long as E1 is bound to E2 in mature virion. After virus attachment to target cell via host MXRA8 and endocytosis, acidification of the endosome induce dissociation of E1/E2 heterodimer and concomitant trimerization of the E1 subunits. This E1 trimer is fusion active, and promotes release of viral nucleocapsid in cytoplasm after endosome and viral membrane fusion. Efficient fusion requires the presence of cholesterol and sphingolipid in the target membrane. The sequence is that of Structural polyprotein from Ross river virus (strain NB5092) (RRV).